The following is a 101-amino-acid chain: UPF0235 protein Cphamn1_2066 (101 aa).

It belongs to the UPF0235 family.

The polypeptide is UPF0235 protein Cphamn1_2066 (Chlorobium phaeobacteroides (strain BS1)).